Here is a 395-residue protein sequence, read N- to C-terminus: S-adenosylmethionine synthase (395 aa).

Residue H14 participates in ATP binding. Position 16 (D16) interacts with Mg(2+). K(+) is bound at residue E42. Positions 55 and 98 each coordinate L-methionine. Residues 98–108 form a flexible loop region; that stretch reads QSPDIAMGVNK. Residues 174-176, 240-241, D249, 255-256, A272, and K276 each bind ATP; these read DGK, RF, and RK. D249 serves as a coordination point for L-methionine. Residue K280 coordinates L-methionine.

The protein belongs to the AdoMet synthase family. Homotetramer; dimer of dimers. Requires Mg(2+) as cofactor. The cofactor is K(+).

It localises to the cytoplasm. The enzyme catalyses L-methionine + ATP + H2O = S-adenosyl-L-methionine + phosphate + diphosphate. Its pathway is amino-acid biosynthesis; S-adenosyl-L-methionine biosynthesis; S-adenosyl-L-methionine from L-methionine: step 1/1. Catalyzes the formation of S-adenosylmethionine (AdoMet) from methionine and ATP. The overall synthetic reaction is composed of two sequential steps, AdoMet formation and the subsequent tripolyphosphate hydrolysis which occurs prior to release of AdoMet from the enzyme. This chain is S-adenosylmethionine synthase, found in Caldanaerobacter subterraneus subsp. tengcongensis (strain DSM 15242 / JCM 11007 / NBRC 100824 / MB4) (Thermoanaerobacter tengcongensis).